The primary structure comprises 263 residues: uncharacterized protein (263 aa).

The stretch at 72–168 forms a coiled coil; sequence LDKKETKELS…RTIVEIRNTK (97 aa). The disordered stretch occupies residues 76–158; sequence ETKELSKKEK…EKKEKKEKED (83 aa). The segment covering 83-95 has biased composition (basic residues); it reads KEKKQLKKEKKAL. The span at 96-107 shows a compositional bias: basic and acidic residues; sequence KKENKGGKDKKD. The segment covering 108–121 has biased composition (basic residues); sequence KKDKKDKKDKKDKK. Composition is skewed to basic and acidic residues over residues 122-131 and 139-158; these read DKKDKGDKKD and KHDDDKSEVKEKKEKKEKED.

This is an uncharacterized protein from Dictyostelium discoideum (Social amoeba).